A 183-amino-acid polypeptide reads, in one-letter code: ATP synthase subunit delta (183 aa).

It belongs to the ATPase delta chain family. F-type ATPases have 2 components, F(1) - the catalytic core - and F(0) - the membrane proton channel. F(1) has five subunits: alpha(3), beta(3), gamma(1), delta(1), epsilon(1). F(0) has three main subunits: a(1), b(2) and c(10-14). The alpha and beta chains form an alternating ring which encloses part of the gamma chain. F(1) is attached to F(0) by a central stalk formed by the gamma and epsilon chains, while a peripheral stalk is formed by the delta and b chains.

Its subcellular location is the cell inner membrane. In terms of biological role, f(1)F(0) ATP synthase produces ATP from ADP in the presence of a proton or sodium gradient. F-type ATPases consist of two structural domains, F(1) containing the extramembraneous catalytic core and F(0) containing the membrane proton channel, linked together by a central stalk and a peripheral stalk. During catalysis, ATP synthesis in the catalytic domain of F(1) is coupled via a rotary mechanism of the central stalk subunits to proton translocation. Functionally, this protein is part of the stalk that links CF(0) to CF(1). It either transmits conformational changes from CF(0) to CF(1) or is implicated in proton conduction. This is ATP synthase subunit delta from Ruthia magnifica subsp. Calyptogena magnifica.